The sequence spans 591 residues: Frizzled-9 (591 aa).

The signal sequence occupies residues 1–22; the sequence is MAVAPLRGALLLWQLLAAGGAA. The Extracellular segment spans residues 23–229; sequence LEIGRFDPER…EVFWSRRDKD (207 aa). In terms of domain architecture, FZ spans 34–155; that stretch reads RGAAPCQAVE…NDPHALCMEA (122 aa). Intrachain disulfides connect cysteine 39–cysteine 100, cysteine 47–cysteine 93, cysteine 84–cysteine 122, cysteine 111–cysteine 152, and cysteine 115–cysteine 139. Residue asparagine 53 is glycosylated (N-linked (GlcNAc...) asparagine). The segment at 58–172 is required for Wnt-activated receptor activity; the sequence is PNLLGHTSQG…PAEPHKGLGM (115 aa). An N-linked (GlcNAc...) asparagine glycan is attached at asparagine 158. The chain crosses the membrane as a helical span at residues 230–250; that stretch reads FALVWMAVWSALCFFSTAFTV. Over 251-266 the chain is Cytoplasmic; the sequence is LTFLLEPHRFQYPERP. Residues 267–287 form a helical membrane-spanning segment; the sequence is IIFLSMCYNVYSLAFLIRAVA. Over 288–315 the chain is Extracellular; sequence GAQSVACDQEAGALYVIQEGLENTGCTL. A helical membrane pass occupies residues 316-336; that stretch reads VFLLLYYFGMASSLWWVVLTL. Residues 337–355 lie on the Cytoplasmic side of the membrane; sequence TWFLAAGKKWGHEAIEAHG. Residues 356–376 form a helical membrane-spanning segment; it reads SYFHMAAWGLPALKTIVILTL. Over 377–400 the chain is Extracellular; sequence RKVAGDELTGLCYVASTDAAALTG. The chain crosses the membrane as a helical span at residues 401–421; the sequence is FVLVPLSGYLVLGSSFLLTGF. Over 422–447 the chain is Cytoplasmic; that stretch reads VALFHIRKIMKTGGTNTEKLEKLMVK. A helical transmembrane segment spans residues 448-468; it reads IGVFSILYTVPATCVIVCYVY. The Extracellular portion of the chain corresponds to 469-508; that stretch reads ERLNMDFWRLRATEQPCAAAAGPGGRRDCSLPGGSVPTVA. The chain crosses the membrane as a helical span at residues 509-529; sequence VFMLKIFMSLVVGITSGVWVW. The Cytoplasmic portion of the chain corresponds to 530 to 591; it reads SSKTFQTWQS…DPSLENPTHL (62 aa). The short motif at 532-537 is the Lys-Thr-X-X-X-Trp motif, mediates interaction with the PDZ domain of Dvl family members element; sequence KTFQTW. The interval 554 to 591 is required for CTNNB1 accumulation and TCF transcription factor activity; it reads ACRAPGSYGRGTHCHYKAPTVVLHMTKTDPSLENPTHL.

Belongs to the G-protein coupled receptor Fz/Smo family. Post-translationally, ubiquitinated by ZNRF3, leading to its degradation by the proteasome. As to expression, expressed predominantly in adult and fetal brain, testis, eye, skeletal muscle and kidney. Moderately expressed in pancreas, thyroid, adrenal cortex, small intestine and stomach. Detected in fetal liver and kidney. Expressed in neural progenitor cells.

The protein resides in the cell membrane. In terms of biological role, receptor for WNT2 that is coupled to the beta-catenin canonical signaling pathway, which leads to the activation of disheveled proteins, inhibition of GSK-3 kinase, nuclear accumulation of beta-catenin and activation of Wnt target genes. Plays a role in neuromuscular junction (NMJ) assembly by negatively regulating the clustering of acetylcholine receptors (AChR) through the beta-catenin canonical signaling pathway. May play a role in neural progenitor cells (NPCs) viability through the beta-catenin canonical signaling pathway by negatively regulating cell cycle arrest leading to inhibition of neuron apoptotic process. During hippocampal development, regulates neuroblast proliferation and apoptotic cell death. Controls bone formation through non canonical Wnt signaling mediated via ISG15. Positively regulates bone regeneration through non canonical Wnt signaling. In Homo sapiens (Human), this protein is Frizzled-9 (FZD9).